Reading from the N-terminus, the 467-residue chain is Glutamate--tRNA ligase 1 (467 aa).

The 'HIGH' region motif lies at Pro8–Gly18. A 'KMSKS' region motif is present at residues Pro230–Arg234. An ATP-binding site is contributed by Lys233.

The protein belongs to the class-I aminoacyl-tRNA synthetase family. Glutamate--tRNA ligase type 1 subfamily. As to quaternary structure, monomer.

It localises to the cytoplasm. The catalysed reaction is tRNA(Glu) + L-glutamate + ATP = L-glutamyl-tRNA(Glu) + AMP + diphosphate. In terms of biological role, catalyzes the attachment of glutamate to tRNA(Glu) in a two-step reaction: glutamate is first activated by ATP to form Glu-AMP and then transferred to the acceptor end of tRNA(Glu). This chain is Glutamate--tRNA ligase 1, found in Petrotoga mobilis (strain DSM 10674 / SJ95).